A 33-amino-acid chain; its full sequence is Neurotoxin Nk-3FTx (33 aa).

Intrachain disulfides connect Cys3-Cys24 and Cys6-Cys11.

Expressed by the venom gland.

The protein resides in the secreted. Its function is as follows. Possible voltage-gated potassium channel (Kv) blocker. Decreases amplitude of compound action potential and conduction velocity in toad sciatic nerve. Has only mild anticoagulant activity even at a concentration of 5ug/ml. Shows no cytotoxicity towards human cell lines. The protein is Neurotoxin Nk-3FTx of Naja kaouthia (Monocled cobra).